The primary structure comprises 645 residues: Chaperone protein DnaK (645 aa).

Thr-199 is subject to Phosphothreonine; by autocatalysis. Disordered stretches follow at residues 509 to 530 and 615 to 645; these read GALS…AEED and EAGA…EVKE. Residues 518–530 are compositionally biased toward basic and acidic residues; the sequence is QMQKDAEANAEED. A compositionally biased stretch (low complexity) spans 615–626; it reads EAGADAAGAAGA. Over residues 631-645 the composition is skewed to acidic residues; it reads GDDDDAIDAEFEVKE.

It belongs to the heat shock protein 70 family.

Functionally, acts as a chaperone. This Rhodopirellula baltica (strain DSM 10527 / NCIMB 13988 / SH1) protein is Chaperone protein DnaK.